Consider the following 445-residue polypeptide: UDP-N-acetylmuramoylalanine--D-glutamate ligase (445 aa).

117 to 123 (GSNGKTT) lines the ATP pocket.

This sequence belongs to the MurCDEF family.

Its subcellular location is the cytoplasm. The catalysed reaction is UDP-N-acetyl-alpha-D-muramoyl-L-alanine + D-glutamate + ATP = UDP-N-acetyl-alpha-D-muramoyl-L-alanyl-D-glutamate + ADP + phosphate + H(+). The protein operates within cell wall biogenesis; peptidoglycan biosynthesis. Cell wall formation. Catalyzes the addition of glutamate to the nucleotide precursor UDP-N-acetylmuramoyl-L-alanine (UMA). The polypeptide is UDP-N-acetylmuramoylalanine--D-glutamate ligase (Neisseria meningitidis serogroup C (strain 053442)).